The chain runs to 266 residues: Early E1A protein (266 aa).

An interaction with RB1 in competition with E2F1 region spans residues 39 to 47; that stretch reads MSLHEMYDL. A PXLXP motif, interaction with host ZMYND11 motif is present at residues 94 to 98; sequence PELQP. The LXCXE motif, interaction with host RB1 motif lies at 103–107; that stretch reads LFCYE. A zinc finger lies at 160–180; sequence CSSCDYHRKTSGCPEILCSLC. A disordered region spans residues 193 to 244; that stretch reads VSDSEPDEPDSTTADSNHGSPPTLRCTPPRDLPRPVPVKASPGKRPAVNSLH. Over residues 203 to 212 the composition is skewed to polar residues; the sequence is STTADSNHGS. A PXDLS motif, CTBP-binding motif is present at residues 255–259; it reads PLDLS. Positions 261–265 match the Nuclear localization signal motif; that stretch reads KRSRS.

It belongs to the adenoviridae E1A protein family. In terms of assembly, interacts with host UBE2I; this interaction interferes with polySUMOylation. Interacts with host RB1; this interaction induces the aberrant dissociation of RB1-E2F1 complex thereby disrupting the activity of RB1 and activating E2F1-regulated genes. Interacts with host ATF7; the interaction enhances ATF7-mediated viral transactivation activity which requires the zinc binding domains of both proteins. Isoform early E1A 32 kDa protein and isoform early E1A 26 kDa protein interact (via N-terminus) with CUL1 and E3 ubiquitin ligase RBX1; these interactions inhibit RBX1-CUL1-dependent elongation reaction of ubiquitin chains and attenuate ubiquitination of SCF(FBXW7) target proteins. Interacts (via PXLXP motif) with host ZMYND11/BS69 (via MYND-type zinc finger); this interaction inhibits E1A mediated transactivation. Interacts with host EP300; this interaction stimulates the acetylation of RB1 by recruiting EP300 and RB1 into a multimeric-protein complex. Interacts with host CTBP1 and CTBP2; this interaction seems to potentiate viral replication. Interacts with host DCAF7. Interacts with host DYRK1A. Interacts with host KPNA4; this interaction allows E1A import into the host nucleus. Interacts with host EP400; this interaction stabilizes MYC. Interacts with host TBP protein; this interaction probably disrupts the TBP-TATA complex.

It is found in the host nucleus. Functionally, plays a role in viral genome replication by driving entry of quiescent cells into the cell cycle. Stimulation of progression from G1 to S phase allows the virus to efficiently use the cellular DNA replicating machinery to achieve viral genome replication. E1A protein has both transforming and trans-activating activities. Induces the disassembly of the E2F1 transcription factor from RB1 by direct competition for the same binding site on RB1, with subsequent transcriptional activation of E2F1-regulated S-phase genes and of the E2 region of the adenoviral genome. Release of E2F1 leads to the ARF-mediated inhibition of MDM2 and causes TP53/p53 to accumulate because it is not targeted for degradation by MDM2-mediated ubiquitination anymore. This increase in TP53, in turn, would arrest the cell proliferation and direct its death but this effect is counteracted by the viral protein E1B-55K. Inactivation of the ability of RB1 to arrest the cell cycle is critical for cellular transformation, uncontrolled cellular growth and proliferation induced by viral infection. Interaction with RBX1 and CUL1 inhibits ubiquitination of the proteins targeted by SCF(FBXW7) ubiquitin ligase complex, and may be linked to unregulated host cell proliferation. The tumorigenesis-restraining activity of E1A may be related to the disruption of the host CtBP-CtIP complex through the CtBP binding motif. The protein is Early E1A protein of Simian adenovirus serotype 7 (SAdV-7).